The following is a 153-amino-acid chain: Late embryogenesis abundant protein B19.4 (153 aa).

The tract at residues 1 to 153 (MASGQQERSE…IDESKFKTKS (153 aa)) is disordered. 3 stretches are compositionally biased toward basic and acidic residues: residues 7 to 19 (ERSE…REGE), 32 to 122 (EAQE…EMGR), and 133 to 153 (GGER…KTKS). 4 tandem repeats follow at residues 43–62 (RGGQ…EMGH), 63–82 (KGGE…EMGH), 83–102 (KGGE…EMGH), and 103–122 (KGGE…EMGR). A 4 X 20 AA tandem repeats region spans residues 43 to 122 (RGGQTRKEQL…GEEGYREMGR (80 aa)).

This sequence belongs to the small hydrophilic plant seed protein family.

Its function is as follows. Lea proteins are late embryonic proteins abundant in higher plant seed embryos. This is Late embryogenesis abundant protein B19.4 (B19.4) from Hordeum vulgare (Barley).